The sequence spans 202 residues: FMN-dependent NADH:quinone oxidoreductase (202 aa).

Residues serine 9, serine 15–serine 17, methionine 95–phenylalanine 98, and serine 139–glycine 142 each bind FMN.

This sequence belongs to the azoreductase type 1 family. Homodimer. The cofactor is FMN.

The enzyme catalyses 2 a quinone + NADH + H(+) = 2 a 1,4-benzosemiquinone + NAD(+). It catalyses the reaction N,N-dimethyl-1,4-phenylenediamine + anthranilate + 2 NAD(+) = 2-(4-dimethylaminophenyl)diazenylbenzoate + 2 NADH + 2 H(+). Quinone reductase that provides resistance to thiol-specific stress caused by electrophilic quinones. Its function is as follows. Also exhibits azoreductase activity. Catalyzes the reductive cleavage of the azo bond in aromatic azo compounds to the corresponding amines. This is FMN-dependent NADH:quinone oxidoreductase from Laribacter hongkongensis (strain HLHK9).